The following is a 230-amino-acid chain: MTCVNVCFFLFPPCHRNKITEADKSLVDLLIPSLCCSLAVFPSIPLINTHSNLCLFSNFSHSCFLFCTHPDTLPTSLSINPKKLSLSFSFPLSQKRPFPNFLHPFTGSELSLFRCLLLFFFFLLFFLSFSFSFSFLFFLSQIFIVYFSSFPILHFLFFFFLCVCVFLSFLFSLSHLLSLAILFLPLLLRVFSTLSRLPRLFCLCLQKKRRVLIPFAFTSFRKIASLPCVC.

Residues 1 to 16 (MTCVNVCFFLFPPCHR) form the signal peptide. A run of 4 helical transmembrane segments spans residues 27-47 (VDLL…IPLI), 118-138 (LFFF…FLFF), 150-170 (FPIL…LSFL), and 172-191 (SLSH…LRVF).

Its subcellular location is the cytoplasm. It localises to the nucleus membrane. This is an uncharacterized protein from Schizosaccharomyces pombe (strain 972 / ATCC 24843) (Fission yeast).